The primary structure comprises 284 residues: 1D-myo-inositol 2-acetamido-2-deoxy-alpha-D-glucopyranoside deacetylase (284 aa).

Residues histidine 12, aspartate 15, and histidine 146 each coordinate Zn(2+).

Belongs to the MshB deacetylase family. Requires Zn(2+) as cofactor.

It catalyses the reaction 1D-myo-inositol 2-acetamido-2-deoxy-alpha-D-glucopyranoside + H2O = 1D-myo-inositol 2-amino-2-deoxy-alpha-D-glucopyranoside + acetate. Its function is as follows. Catalyzes the deacetylation of 1D-myo-inositol 2-acetamido-2-deoxy-alpha-D-glucopyranoside (GlcNAc-Ins) in the mycothiol biosynthesis pathway. This chain is 1D-myo-inositol 2-acetamido-2-deoxy-alpha-D-glucopyranoside deacetylase, found in Mycolicibacterium gilvum (strain PYR-GCK) (Mycobacterium gilvum (strain PYR-GCK)).